Consider the following 432-residue polypeptide: Glutamine synthetase, chloroplastic (432 aa).

One can recognise a GS beta-grasp domain in the interval 79–159; the sequence is IIAEYIWIGG…VICDTYTPQG (81 aa). Positions 166-432 constitute a GS catalytic domain; it reads KRHKAAQIFS…LAAQKLSLNV (267 aa).

Belongs to the glutamine synthetase family. As to quaternary structure, homooctamer.

Its subcellular location is the plastid. It is found in the chloroplast. It carries out the reaction L-glutamate + NH4(+) + ATP = L-glutamine + ADP + phosphate + H(+). Functionally, the light-modulated chloroplast enzyme, encoded by a nuclear gene and expressed primarily in leaves, is responsible for the reassimilation of the ammonia generated by photorespiration. The polypeptide is Glutamine synthetase, chloroplastic (GLN2) (Daucus carota (Wild carrot)).